The sequence spans 879 residues: Mediator of RNA polymerase II transcription subunit 14 (879 aa).

Belongs to the Mediator complex subunit 14 family. Component of the Mediator complex.

The protein resides in the nucleus. In terms of biological role, component of the Mediator complex, a coactivator involved in the regulated transcription of nearly all RNA polymerase II-dependent genes. Mediator functions as a bridge to convey information from gene-specific regulatory proteins to the basal RNA polymerase II transcription machinery. Mediator is recruited to promoters by direct interactions with regulatory proteins and serves as a scaffold for the assembly of a functional preinitiation complex with RNA polymerase II and the general transcription factors. The sequence is that of Mediator of RNA polymerase II transcription subunit 14 (med14) from Schizosaccharomyces pombe (strain 972 / ATCC 24843) (Fission yeast).